Reading from the N-terminus, the 319-residue chain is Olfactory receptor 13F1 (319 aa).

Topologically, residues 1–25 (MFPANWTSVKVFFFLGFFHYPKVQV) are extracellular. N-linked (GlcNAc...) asparagine glycosylation occurs at Asn-5. Residues 26-46 (IIFAVCLLMYLITLLGNIFLI) form a helical membrane-spanning segment. Topologically, residues 47–54 (SITILDSH) are cytoplasmic. Residues 55–75 (LHTPMYLFLSNLSFLDIWYSS) form a helical membrane-spanning segment. The Extracellular segment spans residues 76-99 (SALSPMLANFVSGRNTISFSGCAT). Cys-97 and Cys-189 are oxidised to a cystine. Residues 100 to 120 (QMYLSLAMGSTECVLLPMMAY) form a helical membrane-spanning segment. The Cytoplasmic segment spans residues 121-139 (DRYVAICNPLRYPVIMNRR). Residues 140–160 (TCVQIAAGSWMTGCLTAMVEM) form a helical membrane-spanning segment. Residues 161–197 (MSVLPLSLCGNSIINHFTCEILAILKLVCVDTSLVQL) are Extracellular-facing. The chain crosses the membrane as a helical span at residues 198–217 (IMLVISVLLLPMPMLLICIS). Residues 218–237 (YAFILASILRISSVEGRSKA) are Cytoplasmic-facing. The chain crosses the membrane as a helical span at residues 238 to 258 (FSTCTAHLMVVVLFYGTALSM). Residues 259-271 (HLKPSAVDSQEID) are Extracellular-facing. Residues 272-292 (KFMALVYAGQTPMLNPIIYSL) form a helical membrane-spanning segment. At 293 to 319 (RNKEVKVALKKLLIRNHFNTAFISILK) the chain is on the cytoplasmic side.

Belongs to the G-protein coupled receptor 1 family.

It is found in the cell membrane. In terms of biological role, odorant receptor. The protein is Olfactory receptor 13F1 (OR13F1) of Homo sapiens (Human).